Reading from the N-terminus, the 185-residue chain is Ribosome-recycling factor (185 aa).

This sequence belongs to the RRF family.

It is found in the cytoplasm. In terms of biological role, responsible for the release of ribosomes from messenger RNA at the termination of protein biosynthesis. May increase the efficiency of translation by recycling ribosomes from one round of translation to another. The sequence is that of Ribosome-recycling factor from Geobacillus kaustophilus (strain HTA426).